A 106-amino-acid chain; its full sequence is Small ribosomal subunit protein uS10 (106 aa).

It belongs to the universal ribosomal protein uS10 family. As to quaternary structure, part of the 30S ribosomal subunit.

In terms of biological role, involved in the binding of tRNA to the ribosomes. The polypeptide is Small ribosomal subunit protein uS10 (Prochlorococcus marinus (strain MIT 9211)).